A 223-amino-acid polypeptide reads, in one-letter code: Ribose-5-phosphate isomerase A (223 aa).

Substrate contacts are provided by residues 32–35 (TGST), 85–88 (DGAD), and 98–101 (KGGG). Glu107 functions as the Proton acceptor in the catalytic mechanism. Lys125 provides a ligand contact to substrate.

The protein belongs to the ribose 5-phosphate isomerase family. Homodimer.

It carries out the reaction aldehydo-D-ribose 5-phosphate = D-ribulose 5-phosphate. It functions in the pathway carbohydrate degradation; pentose phosphate pathway; D-ribose 5-phosphate from D-ribulose 5-phosphate (non-oxidative stage): step 1/1. Catalyzes the reversible conversion of ribose-5-phosphate to ribulose 5-phosphate. The sequence is that of Ribose-5-phosphate isomerase A from Pseudomonas syringae pv. syringae (strain B728a).